Here is a 311-residue protein sequence, read N- to C-terminus: Apolipoprotein E (311 aa).

Positions 1 to 18 (MKVWWAVLAAAILAGCRA) are cleaved as a signal peptide. Tandem repeats lie at residues 74–95 (MLME…EQLS), 96–116 (PMAQ…GALE), 117–138 (ADME…AMLG), 139–160 (QSTE…KRLL), 161–182 (RDAE…EGAE), 183–204 (RGVS…LRVA), 205–226 (TVGT…ERLR), and 227–248 (GHLE…EQVE). The segment at 74-248 (MLMEETMKEV…RLNEVREQVE (175 aa)) is 8 X 22 AA approximate tandem repeats. Met136 carries the methionine sulfoxide modification. At Ser140 the chain carries Phosphoserine. An LDL and other lipoprotein receptors binding region spans residues 151 to 161 (HLRKLRKRLLR). 155 to 158 (LRKR) is a heparin binding site. The tract at residues 203-283 (VATVGTLAGR…SWFEPLVEDM (81 aa)) is lipid-binding and lipoprotein association. O-linked (GalNAc...) threonine glycosylation is present at Thr205. A heparin-binding site is contributed by 222–229 (GERLRGHL). Residues 259-311 (PQMRLQAEAFQARLKSWFEPLVEDMQRQWAGLVEKLQAAMPSKAPAAAPIENQ) are homooligomerization. Residues 271 to 283 (RLKSWFEPLVEDM) are specificity for association with VLDL.

This sequence belongs to the apolipoprotein A1/A4/E family. In terms of assembly, homotetramer. May interact with ABCA1; functionally associated with ABCA1 in the biogenesis of HDLs. May interact with APP/A4 amyloid-beta peptide; the interaction is extremely stable in vitro but its physiological significance is unclear. May interact with MAPT. May interact with MAP2. In the cerebrospinal fluid, interacts with secreted SORL1. Interacts with PMEL; this allows the loading of PMEL luminal fragment on ILVs to induce fibril nucleation. Post-translationally, APOE exists as multiple glycosylated and sialylated glycoforms within cells and in plasma. The extent of glycosylation and sialylation are tissue and context specific. In terms of processing, glycated in plasma VLDL. Phosphorylated by FAM20C in the extracellular medium.

It is found in the secreted. The protein localises to the extracellular space. Its subcellular location is the extracellular matrix. The protein resides in the extracellular vesicle. It localises to the endosome. It is found in the multivesicular body. Its function is as follows. APOE is an apolipoprotein, a protein associating with lipid particles, that mainly functions in lipoprotein-mediated lipid transport between organs via the plasma and interstitial fluids. APOE is a core component of plasma lipoproteins and is involved in their production, conversion and clearance. Apolipoproteins are amphipathic molecules that interact both with lipids of the lipoprotein particle core and the aqueous environment of the plasma. As such, APOE associates with chylomicrons, chylomicron remnants, very low density lipoproteins (VLDL) and intermediate density lipoproteins (IDL) but shows a preferential binding to high-density lipoproteins (HDL). It also binds a wide range of cellular receptors including the LDL receptor/LDLR and the very low-density lipoprotein receptor/VLDLR that mediate the cellular uptake of the APOE-containing lipoprotein particles. Finally, APOE also has a heparin-binding activity and binds heparan-sulfate proteoglycans on the surface of cells, a property that supports the capture and the receptor-mediated uptake of APOE-containing lipoproteins by cells. The protein is Apolipoprotein E (APOE) of Oryctolagus cuniculus (Rabbit).